Consider the following 384-residue polypeptide: uncharacterized protein (384 aa).

2 disordered regions span residues 133–257 (RQNS…TNQD) and 297–368 (ERTP…STAT). A compositionally biased stretch (low complexity) spans 143-157 (PSTSSEPEPQPSTSS). The segment covering 302–315 (DQTDITDDSADWSE) has biased composition (acidic residues). A compositionally biased stretch (basic and acidic residues) spans 316–342 (GETRRPSHSEVGERRLSRENNSEDPNR). Basic residues predominate over residues 343–363 (SRSRSRSRERRRRRPRVRPGR).

This is an uncharacterized protein from Gallid herpesvirus 2 (strain Chicken/Md5/ATCC VR-987) (GaHV-2).